The sequence spans 190 residues: Anthranilate synthase component 2 (190 aa).

In terms of domain architecture, Glutamine amidotransferase type-1 spans 1–190 (MILLIDNYDS…ILQNFINCLN (190 aa)). Residue 52–54 (CPG) coordinates L-glutamine. Catalysis depends on Cys79, which acts as the Nucleophile; for GATase activity. L-glutamine-binding positions include Gln83 and 129–130 (SL). Catalysis depends on residues His169 and Glu171.

In terms of assembly, tetramer of two components I and two components II.

It localises to the plastid. The protein localises to the cyanelle. It catalyses the reaction chorismate + L-glutamine = anthranilate + pyruvate + L-glutamate + H(+). It participates in amino-acid biosynthesis; L-tryptophan biosynthesis; L-tryptophan from chorismate: step 1/5. This chain is Anthranilate synthase component 2 (trpG), found in Cyanophora paradoxa.